Reading from the N-terminus, the 800-residue chain is Phenylalanine--tRNA ligase beta subunit (800 aa).

Positions 39–147 (FDAIADIVVG…QDSVPGVRLV (109 aa)) constitute a tRNA-binding domain. Residues 401-477 (WQAAQLRFRP…RVYGMDNIPP (77 aa)) form the B5 domain. The Mg(2+) site is built by Asp455, Asp461, Glu464, and Glu465. In terms of domain architecture, FDX-ACB spans 706-800 (PVFPPVKRDI…SLTEALGVRI (95 aa)).

The protein belongs to the phenylalanyl-tRNA synthetase beta subunit family. Type 1 subfamily. In terms of assembly, tetramer of two alpha and two beta subunits. Mg(2+) serves as cofactor.

It localises to the cytoplasm. The catalysed reaction is tRNA(Phe) + L-phenylalanine + ATP = L-phenylalanyl-tRNA(Phe) + AMP + diphosphate + H(+). The sequence is that of Phenylalanine--tRNA ligase beta subunit from Oleidesulfovibrio alaskensis (strain ATCC BAA-1058 / DSM 17464 / G20) (Desulfovibrio alaskensis).